Consider the following 375-residue polypeptide: Tyrosine--tRNA ligase (375 aa).

The L-tyrosine site is built by Y37, Y168, Q172, D175, and Q190. Residues 251–255 carry the 'KMSKS' region motif; that stretch reads KMSKS. ATP is bound at residue K254.

This sequence belongs to the class-I aminoacyl-tRNA synthetase family. TyrS type 4 subfamily. In terms of assembly, homodimer.

It is found in the cytoplasm. The catalysed reaction is tRNA(Tyr) + L-tyrosine + ATP = L-tyrosyl-tRNA(Tyr) + AMP + diphosphate + H(+). In terms of biological role, catalyzes the attachment of tyrosine to tRNA(Tyr) in a two-step reaction: tyrosine is first activated by ATP to form Tyr-AMP and then transferred to the acceptor end of tRNA(Tyr). This is Tyrosine--tRNA ligase from Thermococcus gammatolerans (strain DSM 15229 / JCM 11827 / EJ3).